Reading from the N-terminus, the 116-residue chain is Cysteine proteinase inhibitor 1 (116 aa).

Residues 1–26 (MVPKPLSLLLFLLLALSAAVVGGRKL) form the signal peptide. Positions 30–89 (GGWRPIESLNSAEVQDVAQFAVSEHNKQANDELQYQSVVRGYTQVVAGTNYRLVIAAKDG) constitute a Cystatin domain. A Secondary area of contact motif is present at residues 73-77 (QVVAG). A glycan (N-linked (GlcNAc...) asparagine) is linked at Asn-109.

It belongs to the cystatin family. Phytocystatin subfamily. Glycosylated.

It localises to the secreted. In terms of biological role, specific inhibitor of papain family cysteine proteinases. Inhibits papain, chymopapain, bromelain, ficin, human cathepsins B, H and L, actinidain and house dustmite endopeptidase 1, but does not inhibit human bleomycin hydrolase. Inhibits papain with an IC(50) of 2.47 nM. Does not inhibit cysteine proteinases belonging to other families including clostripain, streptopain and calpain. This is Cysteine proteinase inhibitor 1 from Actinidia deliciosa (Kiwi).